A 588-amino-acid chain; its full sequence is Aspartate--tRNA ligase (588 aa).

Glutamate 174 is an L-aspartate binding site. An aspartate region spans residues 198-201 (QLFK). Residue arginine 220 participates in L-aspartate binding. Residues 220–222 (RDE) and glutamine 229 contribute to the ATP site. Histidine 448 is a binding site for L-aspartate. Glutamate 482 contacts ATP. Arginine 489 serves as a coordination point for L-aspartate. 534 to 537 (GIDR) contributes to the ATP binding site.

Belongs to the class-II aminoacyl-tRNA synthetase family. Type 1 subfamily. As to quaternary structure, homodimer.

It is found in the cytoplasm. The catalysed reaction is tRNA(Asp) + L-aspartate + ATP = L-aspartyl-tRNA(Asp) + AMP + diphosphate. Functionally, catalyzes the attachment of L-aspartate to tRNA(Asp) in a two-step reaction: L-aspartate is first activated by ATP to form Asp-AMP and then transferred to the acceptor end of tRNA(Asp). In Xanthomonas oryzae pv. oryzae (strain MAFF 311018), this protein is Aspartate--tRNA ligase.